Here is a 100-residue protein sequence, read N- to C-terminus: UPF0235 protein Cvib_0403 (100 aa).

Belongs to the UPF0235 family.

This Chlorobium phaeovibrioides (strain DSM 265 / 1930) (Prosthecochloris vibrioformis (strain DSM 265)) protein is UPF0235 protein Cvib_0403.